A 762-amino-acid polypeptide reads, in one-letter code: MSDAPKRSLNPTLMMNNNNTPPKPLEESLDLKEFIALFKTFFAKERDTIALENDLKQTFTYLNEVDAIGLPTPKSVKESDLIIIKLTKLGTLHLDEIFEIVKRLHYIVVLQNAFKTFTHLKFHERLNAIVLPPFFNDLIALFDDEGKIKQGANATLDALNESLNRLKKESVKIIHHYARSKELAPYLVDTQSHLKHGYECLLLKSGFSGAIKGVVLERSANGYFYLLPESAQKIAQKIAQIGNEIDCCIVEMCQTLSHSLQKHLLFLKFLFKEFDFLDSLQARLNFAKAYNLEFVMPSFTQKKMILENFSHPILKEPKPLNLKFEKSMLAVTGVNAGGKTMLLKSLLSAAFLSKHLIPMKINAHHSIIPYFKEIHAIINDPQNSANNISTFAGRMKQFSALLSKENMLLGVDEIELGTDADEASSLYKTLLEKLLKQNNQIIITTHHKRLSVLMAENKEVELLAALYDEEKERPTYTFLKGVIGKSYAFETALRYGVPHFLIEKAKTFYGEDKEKLNVLIENSSALERELKQKNEHLENALKEQEYLKNAWLLEMEKQKEIFHNKKLELEKSYQQALNILKSEVASKDTSSMHKEIHKASEILSKHKTNQEIPQIITNFQANEKARYKNESVLIVQILDKGYYWIETELGMRLKAHGSLLKKIQKPPKNKFKPPKTTIPKPKEASLRLDLRGQRSEEALDLLDAFLNDALLGGFEEVLICHGKGSGILEKFVKEFLKNHPKVVSFSDAPINLGGSGVKIVKL.

The interval 1–22 (MSDAPKRSLNPTLMMNNNNTPP) is disordered. The segment covering 9 to 20 (LNPTLMMNNNNT) has biased composition (low complexity). 333–340 (GVNAGGKT) lines the ATP pocket. A Smr domain is found at 688–762 (LDLRGQRSEE…GGSGVKIVKL (75 aa)).

This sequence belongs to the DNA mismatch repair MutS family. MutS2 subfamily. As to quaternary structure, homodimer. Binds to stalled ribosomes, contacting rRNA.

Its activity is regulated as follows. ATPase activity is stimulated by DNA. Functionally, endonuclease that is involved in the suppression of homologous recombination and may thus have a key role in the control of bacterial genetic diversity. Also involved in repairing oxidative DNA damage. Has ATPase activity. Binds DNA. In terms of biological role, endonuclease that is involved in the suppression of homologous recombination and thus may have a key role in the control of bacterial genetic diversity. Acts as a ribosome collision sensor, splitting the ribosome into its 2 subunits. Detects stalled/collided 70S ribosomes which it binds and splits by an ATP-hydrolysis driven conformational change. Acts upstream of the ribosome quality control system (RQC), a ribosome-associated complex that mediates the extraction of incompletely synthesized nascent chains from stalled ribosomes and their subsequent degradation. Probably generates substrates for RQC. The polypeptide is Endonuclease MutS2 (Helicobacter pylori (strain ATCC 700392 / 26695) (Campylobacter pylori)).